The chain runs to 296 residues: MDFGLATTLYPDEYNYQTDAYSPTSSPVDLVQVIQQLHASLDPRTVFACYGKVLGQHLPIQGVRLQSEQHKLSWGKRYGISLKRQIICGGTPLTLQYQLLTPLTPSQSICLQEIEPLLLQPLLNAMQYQEMSMQAMFDALTGLGNRHYYSQSLKNAVARAQRKQGSVSLIVLDLDNFKKLNDKYGHKCGDYILKEFGDIIRSSIRSTDQAFRIGGDEFVVIVQGNIHAAGLLCERIVSATNTHASFHQFGVSCSLGAAEASETMEAEQLYEQADKTLYQAKASGRNCYKLSPTQLS.

The GGDEF domain occupies 165-293 (GSVSLIVLDL…GRNCYKLSPT (129 aa)). The Mg(2+) site is built by aspartate 173, leucine 174, and aspartate 216. Aspartate 216 is an active-site residue.

It depends on Mg(2+) as a cofactor.

The catalysed reaction is 2 GTP = 3',3'-c-di-GMP + 2 diphosphate. In terms of biological role, catalyzes the synthesis of cyclic-di-GMP (c-di-GMP) via the condensation of 2 GTP molecules. May be involved in the regulation of formation of solid surface-associated biofilms and pellicles according to environmental conditions. The chain is Diguanylate cyclase DgcS from Shewanella oneidensis (strain ATCC 700550 / JCM 31522 / CIP 106686 / LMG 19005 / NCIMB 14063 / MR-1).